A 213-amino-acid chain; its full sequence is LexA repressor (213 aa).

Positions 29–49 (VREICNAVGFKSTSTVHSYLE) form a DNA-binding region, H-T-H motif. Active-site for autocatalytic cleavage activity residues include S136 and K173.

It belongs to the peptidase S24 family. Homodimer.

The catalysed reaction is Hydrolysis of Ala-|-Gly bond in repressor LexA.. Represses a number of genes involved in the response to DNA damage (SOS response), including recA and lexA. In the presence of single-stranded DNA, RecA interacts with LexA causing an autocatalytic cleavage which disrupts the DNA-binding part of LexA, leading to derepression of the SOS regulon and eventually DNA repair. The protein is LexA repressor of Acetivibrio thermocellus (strain ATCC 27405 / DSM 1237 / JCM 9322 / NBRC 103400 / NCIMB 10682 / NRRL B-4536 / VPI 7372) (Clostridium thermocellum).